We begin with the raw amino-acid sequence, 755 residues long: Beta-galactosidase (755 aa).

Glu-382 acts as the Proton donor in catalysis. The active-site Nucleophile is the Glu-463.

The protein belongs to the glycosyl hydrolase 2 family.

It carries out the reaction Hydrolysis of terminal non-reducing beta-D-galactose residues in beta-D-galactosides.. This is Beta-galactosidase (lacZ) from Rhizobium meliloti (Ensifer meliloti).